A 295-amino-acid chain; its full sequence is UDP-N-acetylenolpyruvoylglucosamine reductase (295 aa).

Positions Lys-24–Gly-188 constitute an FAD-binding PCMH-type domain. The active site involves Arg-168. Ser-217 serves as the catalytic Proton donor. The active site involves Glu-287.

This sequence belongs to the MurB family. FAD serves as cofactor.

It localises to the cytoplasm. The catalysed reaction is UDP-N-acetyl-alpha-D-muramate + NADP(+) = UDP-N-acetyl-3-O-(1-carboxyvinyl)-alpha-D-glucosamine + NADPH + H(+). It participates in cell wall biogenesis; peptidoglycan biosynthesis. Functionally, cell wall formation. The chain is UDP-N-acetylenolpyruvoylglucosamine reductase from Rickettsia rickettsii (strain Iowa).